A 74-amino-acid chain; its full sequence is MSTRTVGSIPALRNCPSCDVSTLSGSSFTPTSTQTPGTAYFLRGVDPANWCDVAQINCIPEDGSMQTVAINVIV.

This is an uncharacterized protein from Caenorhabditis elegans.